The chain runs to 329 residues: ATP phosphoribosyltransferase regulatory subunit (329 aa).

This sequence belongs to the class-II aminoacyl-tRNA synthetase family. HisZ subfamily. As to quaternary structure, heteromultimer composed of HisG and HisZ subunits.

It is found in the cytoplasm. The protein operates within amino-acid biosynthesis; L-histidine biosynthesis; L-histidine from 5-phospho-alpha-D-ribose 1-diphosphate: step 1/9. In terms of biological role, required for the first step of histidine biosynthesis. May allow the feedback regulation of ATP phosphoribosyltransferase activity by histidine. In Streptococcus gordonii (strain Challis / ATCC 35105 / BCRC 15272 / CH1 / DL1 / V288), this protein is ATP phosphoribosyltransferase regulatory subunit.